Consider the following 424-residue polypeptide: Choline-phosphate cytidylyltransferase (424 aa).

Residues 1–70 are disordered; it reads MANPTTGKSS…RKRRRLTKEF (70 aa). The segment covering 14–24 has biased composition (low complexity); it reads KLSNSSLSNLF. At Ser16 the chain carries Phosphoserine. Positions 35–44 are enriched in acidic residues; sequence ETEEQDNEDK. A compositionally biased stretch (basic and acidic residues) spans 45-55; sequence DESKNQDENKD. Thr59 bears the Phosphothreonine mark. CTP is bound by residues 111–119 and Lys149; that span reads VFDLFHLGH. Residues Lys149 and Trp178 each coordinate substrate. Residues 195-196, Tyr200, and 223-227 each bind CTP; these read HD and RTNGV. A Phosphoserine modification is found at Ser346. The interval 348 to 424 is disordered; it reads ATEFANEFTG…LTQKKKQSAN (77 aa). Residues 381–398 show a composition bias toward low complexity; sequence NSNNTNTNSDSDSNTNST. A Phosphoserine; by CK2 modification is found at Ser401.

This sequence belongs to the cytidylyltransferase family.

The protein resides in the membrane. The catalysed reaction is phosphocholine + CTP + H(+) = CDP-choline + diphosphate. It participates in phospholipid metabolism; phosphatidylcholine biosynthesis; phosphatidylcholine from phosphocholine: step 1/2. Its function is as follows. Catalyzes the key rate-limiting step in the CDP-choline pathway for phosphatidylcholine biosynthesis. This chain is Choline-phosphate cytidylyltransferase (PCT1), found in Saccharomyces cerevisiae (strain ATCC 204508 / S288c) (Baker's yeast).